A 1026-amino-acid chain; its full sequence is Multidrug resistance protein MdtC (1026 aa).

The next 11 membrane-spanning stretches (helical) occupy residues 15-35, 333-353, 360-380, 387-407, 431-451, 463-483, 528-548, 853-873, 897-917, 953-973, and 984-1004; these read ILIAAAITLCGILGFRLLPVA, EVEETLAISVALVIMVVFLFL, LIPAVAVPVSLIGTFAAMYLC, LSLMALTIATGFVVDDAIVVL, VGFTVISMSLSLVAVFLPLLL, FAVTLSVAIGISLVVSLTLTP, LVGVVFLGTVALNIWLYIAIP, LILIVAAIATVYIVLGILYES, LFNAPFSLIALIGIMLLIGIV, PIMMTTLAALFGALPLVLSGG, and ITIVGGLVMSQLLTLYTTPVV.

It belongs to the resistance-nodulation-cell division (RND) (TC 2.A.6) family. MdtC subfamily. As to quaternary structure, part of a tripartite efflux system composed of MdtA, MdtB and MdtC. MdtC forms a heteromultimer with MdtB.

The protein localises to the cell inner membrane. This is Multidrug resistance protein MdtC from Salmonella paratyphi C (strain RKS4594).